The following is a 297-amino-acid chain: Heterogeneous nuclear ribonucleoprotein D-like (297 aa).

The disordered stretch occupies residues 1–21; that stretch reads MTGFGATPDFNEGSKINASKN. RRM domains follow at residues 26–108 and 111–190; these read GKMF…KGKE and KKVF…QPKE. The disordered stretch occupies residues 192 to 224; the sequence is YRQQQQKQQKGGRGAATGRGGARGRGRGQGWNQ. The segment covering 202–222 has biased composition (gly residues); it reads GGRGAATGRGGARGRGRGQGW.

The protein resides in the nucleus. It localises to the cytoplasm. Its function is as follows. Acts as a transcriptional regulator. Binds DNA and RNA. In Xenopus tropicalis (Western clawed frog), this protein is Heterogeneous nuclear ribonucleoprotein D-like (hnrnpdl).